The following is a 496-amino-acid chain: Ammonium transporter 1 member 2 (496 aa).

The next 11 helical transmembrane spans lie at 39–59 (LLFS…LCAG), 74–94 (VLDA…FAFG), 120–140 (FFLF…GSIA), 148–168 (YLIY…HWIW), 192–212 (FAGS…GALI), 236–256 (LVVL…PGSF), 274–296 (SAVG…TTLF), 307–327 (VIDV…GCSV), 331–351 (WAAI…NALA), 360–380 (LEAA…TALF), and 412–432 (IVVI…LFLV).

It belongs to the ammonia transporter channel (TC 1.A.11.2) family. As to expression, expressed in exodermis, sclerenchyma, endodermis and pericycle cells of primary root tips.

The protein resides in the membrane. Its function is as follows. Ammonium transporter probably involved in ammonium uptake from the soil and ammonium uptake and retrieval in the vascular system. This chain is Ammonium transporter 1 member 2 (AMT1-2), found in Oryza sativa subsp. japonica (Rice).